The primary structure comprises 269 residues: Interleukin-1 beta (269 aa).

Positions 1–116 (MAEVPELASE…TRNNDACVHD (116 aa)) are excised as a propeptide.

The protein belongs to the IL-1 family. In terms of assembly, monomer. In its precursor form, weakly interacts with full-length MEFV; the mature cytokine does not interact at all. Interacts with integrins ITGAV:ITGBV and ITGA5:ITGB1; integrin-binding is required for IL1B signaling. Interacts with cargo receptor TMED10; the interaction is direct and is required for the secretion of IL1B mature form. Interacts with HSP90AB1; the interaction facilitates cargo translocation into the ERGIC. Interacts with HSP90B1; the interaction facilitates cargo translocation into the ERGIC.

It localises to the cytoplasm. It is found in the cytosol. The protein resides in the secreted. Its subcellular location is the lysosome. The protein localises to the extracellular exosome. Its function is as follows. Potent pro-inflammatory cytokine. Initially discovered as the major endogenous pyrogen, induces prostaglandin synthesis, neutrophil influx and activation, T-cell activation and cytokine production, B-cell activation and antibody production, and fibroblast proliferation and collagen production. Promotes Th17 differentiation of T-cells. Synergizes with IL12/interleukin-12 to induce IFNG synthesis from T-helper 1 (Th1) cells. Plays a role in angiogenesis by inducing VEGF production synergistically with TNF and IL6. Involved in transduction of inflammation downstream of pyroptosis: its mature form is specifically released in the extracellular milieu by passing through the gasdermin-D (GSDMD) pore. This chain is Interleukin-1 beta (IL1B), found in Macaca mulatta (Rhesus macaque).